We begin with the raw amino-acid sequence, 474 residues long: Protein IFIT1 homolog B (474 aa).

TPR repeat units follow at residues 52–85 (VGIH…IQKE), 95–128 (LVTW…CKKF), 141–174 (VDCE…NPEN), 182–216 (AITV…NPDD), 218–250 (YIRV…ISSQ), 251–284 (AYVF…TPTS), 305–339 (ATNW…KRTF), 340–373 (EMAY…KIFE), 378–412 (QEIH…EKMS), and 437–470 (VESV…AADL).

This sequence belongs to the IFIT family.

Functionally, IFIT1B is likely non-functional, lacking the critical antiviral role of IFIT1. Unlike IFIT1, which is essential in the innate immune response as part of an interferon-dependent multiprotein complex, IFIT1B does not prevent the translation of viral RNAs that lack host-specific 2'-O-methylation at their 5' cap. Consequently, it probably cannot inhibit their translation by competing with the host translation machinery. In Homo sapiens (Human), this protein is Protein IFIT1 homolog B.